Here is a 423-residue protein sequence, read N- to C-terminus: Maltoporin 1 (423 aa).

An N-terminal signal peptide occupies residues Met-1–Ala-24.

The protein belongs to the porin LamB (TC 1.B.3) family. In terms of assembly, homotrimer formed of three 18-stranded antiparallel beta-barrels, containing three independent channels.

It localises to the cell outer membrane. The catalysed reaction is beta-maltose(in) = beta-maltose(out). Functionally, involved in the transport of maltose and maltodextrins. The chain is Maltoporin 1 from Yersinia pestis bv. Antiqua (strain Antiqua).